Here is a 31-residue protein sequence, read N- to C-terminus: Cytochrome b6-f complex subunit 6 (31 aa).

The chain crosses the membrane as a helical span at residues 4–26; that stretch reads ITSYFGFLLAASTITPALLIGLS.

This sequence belongs to the PetL family. The 4 large subunits of the cytochrome b6-f complex are cytochrome b6, subunit IV (17 kDa polypeptide, PetD), cytochrome f and the Rieske protein, while the 4 small subunits are PetG, PetL, PetM and PetN. The complex functions as a dimer.

It localises to the plastid. The protein resides in the chloroplast thylakoid membrane. Its function is as follows. Component of the cytochrome b6-f complex, which mediates electron transfer between photosystem II (PSII) and photosystem I (PSI), cyclic electron flow around PSI, and state transitions. PetL is important for photoautotrophic growth as well as for electron transfer efficiency and stability of the cytochrome b6-f complex. The protein is Cytochrome b6-f complex subunit 6 of Liriodendron tulipifera (Tuliptree).